Here is a 350-residue protein sequence, read N- to C-terminus: ADP-ribose pyrophosphatase, mitochondrial (350 aa).

A mitochondrion-targeting transit peptide spans 1–46 (MAGRSLGKAVATVSLSVALASVTVRSSGCRAIPAPRNPFPSCGFHL). Disordered regions lie at residues 53-77 (GSNGVKDNSHNKARTSPYPGSKVER) and 116-153 (SESSFSPRFNEKDGHVERKSQNGLYEIENGRPRNPAGR). Ser-121 is subject to Phosphoserine. Basic and acidic residues predominate over residues 124–135 (FNEKDGHVERKS). The Nudix hydrolase domain occupies 178-334 (WKRDESGNKI…SQFIKLVAEK (157 aa)). The Nudix box motif lies at 215–237 (GMVDPGEKISATLKREFGEEALN).

The protein belongs to the Nudix hydrolase family. NudF subfamily. In terms of assembly, monomer. Interacts with GLOD4. The cofactor is Mg(2+). It depends on Mn(2+) as a cofactor.

The protein localises to the mitochondrion. The enzyme catalyses ADP-D-ribose + H2O = D-ribose 5-phosphate + AMP + 2 H(+). Its function is as follows. Hydrolyzes ADP-ribose (ADPR) to AMP and ribose 5'-phosphate. The sequence is that of ADP-ribose pyrophosphatase, mitochondrial (Nudt9) from Rattus norvegicus (Rat).